The following is a 272-amino-acid chain: MLQACKMEGFSLTAPPSDDLVTYDSELYQRPMHDYYSFVGSDGESHSDHYWDFSAHHVHNNEFENFPENHFTELQSVQPPQLQQLYRHMELEQMHVLDTPMVPPHTGLSHQVSYMPRMCFPYQTLSPAHQQSSDEEEGERQSPPLEVSDGEADGLEPGPGLLHGETGSKKKIRLYQFLLDLLRSGDMKDSIWWVDKDKGTFQFSSKHKEALAHRWGIQKGNRKKMTYQKMARALRNYGKTGEVKKVKKKLTYQFSGEVLGRGGLAERRLPPH.

The tract at residues 126–165 (SPAHQQSSDEEEGERQSPPLEVSDGEADGLEPGPGLLHGE) is disordered. Phosphoserine is present on residues Ser142 and Ser148. A compositionally biased stretch (low complexity) spans 155 to 165 (LEPGPGLLHGE). A DNA-binding region (ETS) is located at residues 172–255 (IRLYQFLLDL…VKKKLTYQFS (84 aa)). Positions 219, 232, 235, and 245 each coordinate DNA.

It belongs to the ETS family. Binds DNA as a monomer. Can form homomers. Directly interacts with CEBPD/NF-IL6-beta; this interaction does not affect DNA-binding properties of each partner. Interacts with NONO/p54(nrb). Interacts with RUNX1/AML1. Interacts with GFI1; the interaction represses SPI1 transcriptional activity, hence blocks SPI1-induced macrophage differentiation of myeloid progenitor cells. Interacts with CEBPE. Interacts with IRF4/Pip and IRF8. Interacts with JUN. Interacts with RB1. Interacts with TBP. Expressed in spleen, thymus and bone-marrow macrophages.

Its subcellular location is the nucleus. Its activity is regulated as follows. Transcriptional activity at macrophage-specific genes is inhibited by interaction with GFI1, which results in inhibition of SPI1-induced macrophage differentiation of myeloid progenitor cells, but not that of the granulocyte lineage. In terms of biological role, pioneer transcription factor, which controls hematopoietic cell fate by decompacting stem cell heterochromatin and allowing other transcription factors to enter otherwise inaccessible genomic sites. Once in open chromatin, can directly control gene expression by binding genetic regulatory elements and can also more broadly influence transcription by recruiting transcription factors, such as interferon regulatory factors (IRFs), to otherwise inaccessible genomic regions. Transcriptionally activates genes important for myeloid and lymphoid lineages, such as CSF1R. Transcriptional activation from certain promoters, possibly containing low affinity binding sites, is achieved cooperatively with other transcription factors. FCER1A transactivation is achieved in cooperation with GATA1. May be particularly important for the pro- to pre-B cell transition. Binds (via the ETS domain) onto the purine-rich DNA core sequence 5'-GAGGAA-3', also known as the PU-box. In vitro can bind RNA and interfere with pre-mRNA splicing. The sequence is that of Transcription factor PU.1 (Spi1) from Mus musculus (Mouse).